The following is a 355-amino-acid chain: Protein beta (355 aa).

In terms of biological role, the presence of this protein prevents gop protein from killing E.coli. This is Protein beta (Beta) from Escherichia coli (Bacteriophage P4).